Reading from the N-terminus, the 383-residue chain is Lipid-A-disaccharide synthase (383 aa).

Belongs to the LpxB family.

It carries out the reaction 2-N,3-O-bis[(3R)-3-hydroxytetradecanoyl]-alpha-D-glucosaminyl 1-phosphate + UDP-2-N,3-O-bis[(3R)-3-hydroxytetradecanoyl]-alpha-D-glucosamine = lipid A disaccharide (E. coli) + UDP + H(+). The catalysed reaction is a lipid X + a UDP-2-N,3-O-bis[(3R)-3-hydroxyacyl]-alpha-D-glucosamine = a lipid A disaccharide + UDP + H(+). It functions in the pathway glycolipid biosynthesis; lipid IV(A) biosynthesis; lipid IV(A) from (3R)-3-hydroxytetradecanoyl-[acyl-carrier-protein] and UDP-N-acetyl-alpha-D-glucosamine: step 5/6. Its function is as follows. Condensation of UDP-2,3-diacylglucosamine and 2,3-diacylglucosamine-1-phosphate to form lipid A disaccharide, a precursor of lipid A, a phosphorylated glycolipid that anchors the lipopolysaccharide to the outer membrane of the cell. The chain is Lipid-A-disaccharide synthase from Klebsiella pneumoniae subsp. pneumoniae (strain ATCC 700721 / MGH 78578).